The sequence spans 124 residues: uncharacterized protein (124 aa).

It localises to the cytoplasm. The protein resides in the nucleus. This is an uncharacterized protein from Schizosaccharomyces pombe (strain 972 / ATCC 24843) (Fission yeast).